The primary structure comprises 95 residues: Small ribosomal subunit protein bS6 (95 aa).

Belongs to the bacterial ribosomal protein bS6 family.

Binds together with bS18 to 16S ribosomal RNA. This Geobacillus kaustophilus (strain HTA426) protein is Small ribosomal subunit protein bS6.